The primary structure comprises 346 residues: Heat-inducible transcription repressor HrcA (346 aa).

Belongs to the HrcA family.

Functionally, negative regulator of class I heat shock genes (grpE-dnaK-dnaJ and groELS operons). Prevents heat-shock induction of these operons. This Pediococcus pentosaceus (strain ATCC 25745 / CCUG 21536 / LMG 10740 / 183-1w) protein is Heat-inducible transcription repressor HrcA.